A 116-amino-acid polypeptide reads, in one-letter code: Small ribosomal subunit protein bS16 (116 aa).

It belongs to the bacterial ribosomal protein bS16 family.

The chain is Small ribosomal subunit protein bS16 from Chlamydia trachomatis serovar L2 (strain ATCC VR-902B / DSM 19102 / 434/Bu).